Consider the following 348-residue polypeptide: Guanosine ABC transporter permease protein NupP (348 aa).

The next 9 helical transmembrane spans lie at 8–28, 61–81, 85–105, 107–127, 136–156, 189–209, 237–257, 277–297, and 320–340; these read LLVP…IMLV, YILS…NIGV, LLVG…PAYI, LPLA…IPGI, EVIV…YIIS, LHLG…IINK, IMTS…MEGL, IAVA…ACLL, and IVIA…FVMG.

This sequence belongs to the binding-protein-dependent transport system permease family. The complex is composed of two ATP-binding proteins (NupO), two transmembrane proteins (NupP and NupQ) and a solute-binding protein (NupN).

The protein localises to the cell membrane. In terms of biological role, part of an ABC transporter complex involved in the uptake of guanosine. Responsible for the translocation of the substrate across the membrane. May be a nucleoside transporter of broad specificity but with various affinities for different substrates. The chain is Guanosine ABC transporter permease protein NupP from Bacillus subtilis (strain 168).